The chain runs to 118 residues: Large ribosomal subunit protein bL19 (118 aa).

The protein belongs to the bacterial ribosomal protein bL19 family.

Functionally, this protein is located at the 30S-50S ribosomal subunit interface and may play a role in the structure and function of the aminoacyl-tRNA binding site. This is Large ribosomal subunit protein bL19 from Salinispora arenicola (strain CNS-205).